We begin with the raw amino-acid sequence, 102 residues long: Antimicrobial peptide 1 (102 aa).

The first 26 residues, 1–26 (MASTKLFFSVITVMMLIAMASEMVNG), serve as a signal peptide directing secretion. 3 disulfide bridges follow: cysteine 37–cysteine 90, cysteine 47–cysteine 102, and cysteine 49–cysteine 75.

It is found in the secreted. Antimicrobial peptide which inhibits the growth of a variety of fungi, oomycetes, Gram-positive bacterial phytopatogenes and S.cerevisiae in vitro. No activity against E.coli. This is Antimicrobial peptide 1 from Macadamia integrifolia (Macadamia nut).